We begin with the raw amino-acid sequence, 37 residues long: Large ribosomal subunit protein bL36 (37 aa).

It belongs to the bacterial ribosomal protein bL36 family.

The sequence is that of Large ribosomal subunit protein bL36 from Nostoc sp. (strain PCC 7120 / SAG 25.82 / UTEX 2576).